Reading from the N-terminus, the 559-residue chain is Actin-binding protein WASF1 (559 aa).

3 disordered regions span residues 170 to 202, 304 to 383, and 412 to 490; these read EDKRKEKRKQKQKNLDRPHEPEKVPRAPHDRRR, IENR…GVLH, and VHPL…HPST. The span at 182–202 shows a compositional bias: basic and acidic residues; it reads KNLDRPHEPEKVPRAPHDRRR. The span at 304 to 313 shows a compositional bias: polar residues; the sequence is IENRPQSPAT. Residues 322-332 show a composition bias toward pro residues; that stretch reads PTPPPPPPPLP. Positions 333–346 are enriched in low complexity; that stretch reads SALSTSSLRASMTS. Asymmetric dimethylarginine; alternate is present on Arg341. Arg341 carries the post-translational modification Omega-N-methylarginine; alternate. 3 stretches are compositionally biased toward pro residues: residues 347 to 360, 423 to 437, and 460 to 477; these read TPPPPVPPPPPPPA, LPPPPPPPPLPPPGI, and STAPGPHVPLMPPSPPSQ. Ser489 bears the Phosphoserine mark. Positions 497–514 constitute a WH2 domain; sequence ARSVLLEAIRKGIQLRKV.

This sequence belongs to the SCAR/WAVE family. As to quaternary structure, component of the WAVE1 complex composed of ABI2, CYFIP1 or CYFIP2, BRK1, NCKAP1 and WASF1/WAVE1. Within the complex, a heterodimer containing NCKAP1 and CYFIP1 interacts with a heterotrimer formed by WAVE1, ABI2 and BRK1. CYFIP2 binds to activated RAC1 which causes the complex to dissociate, releasing activated WASF1. The complex can also be activated by NCK1. Binds actin and the Arp2/3 complex. Interacts with BAIAP2. Interacts with SHANK3; the interaction mediates the association of SHANK3 with the WAVE1 complex. Interacts with ABI1 (via N-terminus). Interacts with SORBS2; this interaction greatly enhances phosphorylation by ABL1 and dephosphorylation by PTPN12 and might mediate partial to focal adhesion sites.

It localises to the cytoplasm. The protein localises to the cytoskeleton. The protein resides in the synapse. It is found in the cell junction. Its subcellular location is the focal adhesion. In terms of biological role, downstream effector molecule involved in the transmission of signals from tyrosine kinase receptors and small GTPases to the actin cytoskeleton. Promotes formation of actin filaments. Part of the WAVE complex that regulates lamellipodia formation. The WAVE complex regulates actin filament reorganization via its interaction with the Arp2/3 complex. As component of the WAVE1 complex, required for BDNF-NTRK2 endocytic trafficking and signaling from early endosomes. Also involved in the regulation of mitochondrial dynamics. The sequence is that of Actin-binding protein WASF1 (WASF1) from Pongo abelii (Sumatran orangutan).